A 515-amino-acid chain; its full sequence is Galactokinase (515 aa).

Arginine 48, aspartate 54, histidine 55, and aspartate 57 together coordinate alpha-D-galactose. Positions 155, 157, 159, and 160 each coordinate ATP. Residue aspartate 205 coordinates alpha-D-galactose. Aspartate 205 serves as the catalytic Proton acceptor. ATP contacts are provided by serine 249, asparagine 250, and lysine 251. Tyrosine 259 is an alpha-D-galactose binding site.

This sequence belongs to the GHMP kinase family. GalK subfamily.

The catalysed reaction is alpha-D-galactose + ATP = alpha-D-galactose 1-phosphate + ADP + H(+). It functions in the pathway carbohydrate metabolism; galactose metabolism. Its function is as follows. Galactokinase is a key enzyme in the galactose metabolism where it catalyzes the conversion of alpha-D-galactose to galactose 1-phosphate. Can also induce the transcription of the gal genes in response to the organism being challenged with galactose as the sole source of carbon. This Candida albicans (Yeast) protein is Galactokinase.